The following is a 151-amino-acid chain: Large ribosomal subunit protein uL15 (151 aa).

The disordered stretch occupies residues Met1 to Leu60.

Belongs to the universal ribosomal protein uL15 family. As to quaternary structure, part of the 50S ribosomal subunit.

Binds to the 23S rRNA. This Streptomyces coelicolor (strain ATCC BAA-471 / A3(2) / M145) protein is Large ribosomal subunit protein uL15.